A 453-amino-acid chain; its full sequence is Homogentisate 1,2-dioxygenase (453 aa).

The Proton acceptor role is filled by His-306. 2 residues coordinate Fe cation: His-349 and Glu-355. Homogentisate contacts are provided by Tyr-364 and His-385. His-385 serves as a coordination point for Fe cation.

The protein belongs to the homogentisate dioxygenase family. Hexamer; dimer of trimers. It depends on Fe cation as a cofactor.

It catalyses the reaction homogentisate + O2 = 4-maleylacetoacetate + H(+). It participates in amino-acid degradation; L-phenylalanine degradation; acetoacetate and fumarate from L-phenylalanine: step 4/6. Its function is as follows. Involved in the catabolism of homogentisate (2,5-dihydroxyphenylacetate or 2,5-OH-PhAc), a central intermediate in the degradation of phenylalanine and tyrosine. Catalyzes the oxidative ring cleavage of the aromatic ring of homogentisate to yield maleylacetoacetate. This is Homogentisate 1,2-dioxygenase from Rhizobium johnstonii (strain DSM 114642 / LMG 32736 / 3841) (Rhizobium leguminosarum bv. viciae).